Reading from the N-terminus, the 206-residue chain is Thymidylate kinase (206 aa).

16 to 23 contributes to the ATP binding site; the sequence is GIDGTGKS.

It belongs to the thymidylate kinase family.

The enzyme catalyses dTMP + ATP = dTDP + ADP. Its function is as follows. Phosphorylation of dTMP to form dTDP in both de novo and salvage pathways of dTTP synthesis. The chain is Thymidylate kinase from Akkermansia muciniphila (strain ATCC BAA-835 / DSM 22959 / JCM 33894 / BCRC 81048 / CCUG 64013 / CIP 107961 / Muc).